The primary structure comprises 264 residues: Carbonic anhydrase 7 (264 aa).

One can recognise an Alpha-carbonic anhydrase domain in the interval 5-262 (HGWGYGQDDG…LKGRVVKASF (258 aa)). The Proton donor/acceptor role is filled by His-66. Residues His-96, His-98, and His-121 each coordinate Zn(2+). 201–202 (TT) provides a ligand contact to substrate.

It belongs to the alpha-carbonic anhydrase family. The cofactor is Zn(2+).

It is found in the cytoplasm. The catalysed reaction is hydrogencarbonate + H(+) = CO2 + H2O. With respect to regulation, activated by histamine, L-adrenaline, L- and D-histidine, and L- and D-phenylalanine. Inhibited by coumarins, sulfonamide derivatives such as acetazolamide (AZA), by saccharin and Foscarnet (phosphonoformate trisodium salt). Its function is as follows. Reversible hydration of carbon dioxide. The chain is Carbonic anhydrase 7 (CA7) from Homo sapiens (Human).